The following is a 517-amino-acid chain: ATP synthase subunit alpha 1 (517 aa).

176 to 183 (GDRQTGKT) is a binding site for ATP.

The protein belongs to the ATPase alpha/beta chains family. In terms of assembly, F-type ATPases have 2 components, CF(1) - the catalytic core - and CF(0) - the membrane proton channel. CF(1) has five subunits: alpha(3), beta(3), gamma(1), delta(1), epsilon(1). CF(0) has three main subunits: a(1), b(2) and c(9-12). The alpha and beta chains form an alternating ring which encloses part of the gamma chain. CF(1) is attached to CF(0) by a central stalk formed by the gamma and epsilon chains, while a peripheral stalk is formed by the delta and b chains.

Its subcellular location is the cell inner membrane. The catalysed reaction is ATP + H2O + 4 H(+)(in) = ADP + phosphate + 5 H(+)(out). In terms of biological role, produces ATP from ADP in the presence of a proton gradient across the membrane. The alpha chain is a regulatory subunit. The polypeptide is ATP synthase subunit alpha 1 (Shewanella frigidimarina (strain NCIMB 400)).